Reading from the N-terminus, the 149-residue chain is Transcriptional repressor NrdR (149 aa).

The segment at C3–C34 is a zinc-finger region. The 91-residue stretch at P49–E139 folds into the ATP-cone domain.

Belongs to the NrdR family. It depends on Zn(2+) as a cofactor.

Functionally, negatively regulates transcription of bacterial ribonucleotide reductase nrd genes and operons by binding to NrdR-boxes. This chain is Transcriptional repressor NrdR, found in Cronobacter sakazakii (strain ATCC BAA-894) (Enterobacter sakazakii).